The chain runs to 207 residues: Hepatic lectin (207 aa).

Met-1 is modified (N-acetylmethionine). At 1-23 (MDEERLSDNVRLYKGGSIRQGLR) the chain is on the cytoplasmic side. Residues 24–48 (SFAAVYVLLALSFLLLTLLSSVSLA) form a helical; Signal-anchor for type II membrane protein membrane-spanning segment. Residues 49-207 (RIAALSSKLS…YYVCEKPLPK (159 aa)) lie on the Extracellular side of the membrane. Residue Asn-67 is glycosylated (N-linked (GlcNAc...) asparagine). Residues 77–203 (PCGAQSRQWE…TYECYYVCEK (127 aa)) enclose the C-type lectin domain. 3 disulfides stabilise this stretch: Cys-78/Cys-92, Cys-109/Cys-201, and Cys-179/Cys-193.

In terms of processing, some or all of the cysteines are involved in disulfide bonds.

It localises to the membrane. Hepatic lectin is a membrane receptor protein that recognizes and binds exposed N-acetylglucosamine moieties of plasma glycoproteins, thus mediating their clearance (from the circulation) and endocytosis. The polypeptide is Hepatic lectin (Gallus gallus (Chicken)).